A 238-amino-acid polypeptide reads, in one-letter code: Ribonuclease HII (238 aa).

In terms of domain architecture, RNase H type-2 spans 12-197 (GIVAGVDEAG…VLELLTDDLL (186 aa)). A divalent metal cation-binding residues include Asp18, Glu19, and Asp107.

Belongs to the RNase HII family. Mn(2+) serves as cofactor. The cofactor is Mg(2+).

It localises to the cytoplasm. The enzyme catalyses Endonucleolytic cleavage to 5'-phosphomonoester.. Endonuclease that specifically degrades the RNA of RNA-DNA hybrids. The sequence is that of Ribonuclease HII (rnhB) from Thermotoga maritima (strain ATCC 43589 / DSM 3109 / JCM 10099 / NBRC 100826 / MSB8).